The sequence spans 244 residues: 2-C-methyl-D-erythritol 4-phosphate cytidylyltransferase (244 aa).

Belongs to the IspD/TarI cytidylyltransferase family. IspD subfamily.

The catalysed reaction is 2-C-methyl-D-erythritol 4-phosphate + CTP + H(+) = 4-CDP-2-C-methyl-D-erythritol + diphosphate. The protein operates within isoprenoid biosynthesis; isopentenyl diphosphate biosynthesis via DXP pathway; isopentenyl diphosphate from 1-deoxy-D-xylulose 5-phosphate: step 2/6. Functionally, catalyzes the formation of 4-diphosphocytidyl-2-C-methyl-D-erythritol from CTP and 2-C-methyl-D-erythritol 4-phosphate (MEP). This is 2-C-methyl-D-erythritol 4-phosphate cytidylyltransferase from Corynebacterium diphtheriae (strain ATCC 700971 / NCTC 13129 / Biotype gravis).